Reading from the N-terminus, the 519-residue chain is Cytochrome P450 CYP99A1 (519 aa).

Cysteine 453 serves as a coordination point for heme.

It belongs to the cytochrome P450 family. Requires heme as cofactor.

Its subcellular location is the membrane. The chain is Cytochrome P450 CYP99A1 (CYP99A1) from Sorghum bicolor (Sorghum).